Here is a 186-residue protein sequence, read N- to C-terminus: MSEGTDLKELKRRMDGAIAAFKSDIASLRTGRASANILDPVTIEAYGSRMPLNQVANITVPEPRMLSVSVWDKSMVGAVERGIRESNLGLNPIIDGQNLRIPLPELNEERRRSLVKVAHEYAEKAKVAIRHVRRDGMDGLKKAEKDGDIGQDEGRSLSERVQKMTDETISDIDRLLVDKEKEIMQV.

Positions 140–163 (LKKAEKDGDIGQDEGRSLSERVQK) are disordered.

The protein belongs to the RRF family.

The protein resides in the cytoplasm. In terms of biological role, responsible for the release of ribosomes from messenger RNA at the termination of protein biosynthesis. May increase the efficiency of translation by recycling ribosomes from one round of translation to another. The chain is Ribosome-recycling factor from Rhizobium rhizogenes (strain K84 / ATCC BAA-868) (Agrobacterium radiobacter).